The following is a 273-amino-acid chain: Large ribosomal subunit protein uL2cz/uL2cy (273 aa).

Disordered stretches follow at residues 1–20 (MAIH…AVDS) and 224–254 (NPVD…PALG).

It belongs to the universal ribosomal protein uL2 family. Part of the 50S ribosomal subunit.

It localises to the plastid. It is found in the chloroplast. In Nuphar advena (Common spatterdock), this protein is Large ribosomal subunit protein uL2cz/uL2cy (rpl2-A).